A 1416-amino-acid chain; its full sequence is Telomere-associated protein RIF1 (1416 aa).

4 disordered regions span residues Pro-789–Gln-858, Pro-886–Gly-984, Ala-1021–Pro-1054, and Thr-1166–Glu-1186. Residues Gly-928–Met-945 are compositionally biased toward low complexity. Positions Gln-1029 to Ile-1050 are enriched in polar residues.

The protein belongs to the RIF1 family. Highly divergent. In terms of assembly, interacts with Pp1-87b. Interacts with SuUR (via SNF2-like region). In terms of processing, phosphorylated, probably by Cdk1; phosphorylation regulates dissociation from heterochromatin. In terms of tissue distribution, expressed in nurse cells and follicle cells in the adult female (at protein level). Detected in adult at extremely low levels.

The protein localises to the nucleus. The protein resides in the chromosome. Its subcellular location is the telomere. Regulates the timing of initiation of DNA replication. Functions in copy number control by promoting the underreplication of DNA, which is found in many late replicating euchromatic regions of salivary gland polytene chromosomes. Promotes underreplication by localizing to active DNA replication forks in a partially SuUR-dependent manner, and inhibiting replication fork progression. Might also work as an adapter to recruit Pp1-87B to multiple sites on the chromosome and may function with Pp1-87B to mediate underreplication. Plays an essential role in embryonic development, in the transition from larvae to pupae and, probably, in proliferating tissues later on. In embryos, during mid-blastula transition, binds to and selectively delays the replication of large blocks of repetitive DNA satellite sequences during S phase in response to the activity of Cdk1; maternal Rif1 is specifically required for the normal extension of S phase 14. Unlike mammalian orthologs, does not appear to play a role in DNA damage repair. The chain is Telomere-associated protein RIF1 from Drosophila melanogaster (Fruit fly).